Consider the following 170-residue polypeptide: Prenyl-diphosphate phosphatase (170 aa).

A Nudix hydrolase domain is found at 25-155; it reads HIHRASQLIL…PGNYTPALRE (131 aa). A Nudix box motif is present at residues 59-83; it reads YSVSGTVADESYEACIAREMLEEIG. The Mg(2+) site is built by Glu-77 and Glu-81.

This sequence belongs to the Nudix hydrolase family. It depends on Mg(2+) as a cofactor.

The catalysed reaction is dimethylallyl diphosphate + H2O = dimethylallyl phosphate + phosphate + H(+). It catalyses the reaction isopentenyl diphosphate + H2O = isopentenyl phosphate + phosphate + H(+). It carries out the reaction (2E,6E)-farnesyl diphosphate + H2O = (2E,6E)-farnesyl phosphate + phosphate + H(+). The enzyme catalyses (2E)-geranyl diphosphate + H2O = (2E)-geranyl phosphate + phosphate + H(+). The protein operates within isoprenoid biosynthesis. In terms of biological role, hydrolyzes homoallylic isopentenyl diphosphate (IPP), its allylic isomer dimethylallyl diphosphate (DMAPP) and short-chain prenyl diphosphates geranyl diphosphate (GPP) and farnesyl diphosphate (FPP) to their corresponding monophosphate forms with high activity. The preferred substrate is IPP. ADP, NADPH, Ap5A and thiamine diphosphate (TPP) are weakly hydrolyzed. No hydrolysis with ATP, dNTPs, 8-OH-dGTP, NAD+, FAD or acetyl-CoA. The likely physiological role of this enzyme is to provide a substrate dimethylallyl phosphate (DMAP) for prenylated flavin mononucleotide (prenyl-FMN) synthase MM_1871 involved in the biosynthesis of prenyl-FMN, a coenzyme required in the archaea-specific mevalonate pathway. The protein is Prenyl-diphosphate phosphatase of Methanosarcina mazei (strain ATCC BAA-159 / DSM 3647 / Goe1 / Go1 / JCM 11833 / OCM 88) (Methanosarcina frisia).